Here is a 1340-residue protein sequence, read N- to C-terminus: TSET complex member tstE (1340 aa).

Positions 56-67 (NQSQTSPNSNDG) are enriched in low complexity. Disordered stretches follow at residues 56-75 (NQSQTSPNSNDGNIGGGSGG) and 110-131 (SGSGGGGSGSNSNIGGGGGGGQ). WD repeat units lie at residues 208–246 (VNQILFNCLCFHPKSPILYAAIRNEVHFYDIITKSVIGK), 250–294 (DPTE…LQTI), 345–384 (GHKKPISAIAHHPAKTILASCSTDGQLKIWDTRNNMSFLN), and 397–436 (IEHSNHYFLVFEPTGKYLVMTGSSGLTLVYGDLTSQNPQE). Residues 1216-1251 (KSHMSSTTTLRRSPSIENIRTTSTTFDSSKFNTDNQ) show a composition bias toward polar residues. Positions 1216–1340 (KSHMSSTTTL…TPTPTTTLSS (125 aa)) are disordered. Residues 1252 to 1275 (ELFDDDSDDDSDSGADADVDSENE) are compositionally biased toward acidic residues. The segment covering 1286–1318 (ASLQHNDNSSLTNITVTDNDSNLDQDITSNTGS) has biased composition (polar residues). Positions 1328–1340 (LSSTPTPTTTLSS) are enriched in low complexity.

As to quaternary structure, component of the TSET complex, a heterohexamer composed of tstA, tstB, tstC, tstD, tstE and tstF, which may act in plasma membrane turnover. tstA, tstB, tstC and tstD are likely to be the core complex members with tstE and tstF acting as associated scaffold proteins.

The polypeptide is TSET complex member tstE (Dictyostelium discoideum (Social amoeba)).